We begin with the raw amino-acid sequence, 596 residues long: Cis-3-hydroxy-L-proline dehydratase (596 aa).

Ser-67 functions as the Proton acceptor in the catalytic mechanism.

The protein belongs to the AcnX family. In terms of assembly, monomer. Fe(3+) serves as cofactor.

It carries out the reaction cis-3-hydroxy-L-proline = 1-pyrroline-2-carboxylate + H2O. With respect to regulation, inhibited by Zn(2+). Not inhibited by pyrrole-2-carboxylate nor its derivative 2-thiophenecarboxylate. Its function is as follows. Catalyzes the dehydration of cis-3-hydroxy-L-proline (c3LHyp) to Delta(1)-pyrroline-2-carboxylate (Pyr2C). No activity with L-proline, trans-4-hydroxy-L-proline (t4LHyp), cis-4-hydroxy-L-proline (c4LHyp), trans-3-hydroxy-L-proline (t3LHyp), D-proline, cis-4-hydroxy-D-proline (c4DHyp), trans-4-hydroxy-D-proline (t4DHyp) or L-serine as substrates. Because of the low catalytic efficiency, C3LHyp is likely not a main physiological substrate of this enzyme in H.jecorina. This chain is Cis-3-hydroxy-L-proline dehydratase, found in Hypocrea jecorina (strain QM6a) (Trichoderma reesei).